The primary structure comprises 153 residues: ORM1-like protein 1 (153 aa).

Topologically, residues 1–26 are cytoplasmic; it reads MNVGVAHSEVNPNTRVMNSRGMWLTY. 2 helical membrane passes run 27 to 46 and 47 to 64; these read ALGV…FSVP and VAWT…YVFL. Residues 65–100 are Cytoplasmic-facing; the sequence is HAVKGTPFETPDQGKARLLTHWEQLDYGVQFTSSRK. Residues 101–121 form a helical membrane-spanning segment; the sequence is FFTISPIILYFLASFYTKYDT. At 122-123 the chain is on the extracellular side; that stretch reads TH. Residues 124-140 traverse the membrane as a helical segment; that stretch reads FILNTASLLSVLIPKMP. At 141–153 the chain is on the cytoplasmic side; sequence QLHGVRIFGINKY.

This sequence belongs to the ORM family. In terms of assembly, ceramide-sensitive subunit of the serine palmitoyltransferase (SPT) complex, which is also composed of SPTLC1, SPTLC2/3 and SPTSSA/B.

The protein localises to the endoplasmic reticulum membrane. Plays an essential role in the homeostatic regulation of sphingolipid de novo biosynthesis by modulating the activity of the serine palmitoyltransferase (SPT) in response to ceramide levels. When complexed to SPT, the binding of ceramides to its N-terminus stabilizes a conformation that block SPT substrate entry, hence preventing SPT catalytic activity. Through this mechanism, maintains ceramide levels at sufficient concentrations for the production of complex sphingolipids, but which prevents the accumulation of ceramides to levels that trigger apoptosis. This Bos taurus (Bovine) protein is ORM1-like protein 1 (ORMDL1).